Reading from the N-terminus, the 677-residue chain is Probable potassium transport system protein Kup (677 aa).

12 helical membrane-spanning segments follow: residues 13–33 (GALI…LYTM), 54–74 (VSLV…IIAL), 98–118 (WLLL…TLTP), 137–157 (FIFP…LLIV), 171–191 (IFGP…LVNI), 217–237 (TGIF…ALYS), 249–269 (VSWI…GAWI), 296–316 (IFGV…LISG), 345–365 (MYIG…VWAF), 374–394 (AYGL…YQFI), 402–422 (ILAF…LIAS), and 429–449 (GGYA…IWFY).

The protein belongs to the HAK/KUP transporter (TC 2.A.72) family.

Its subcellular location is the cell membrane. It catalyses the reaction K(+)(in) + H(+)(in) = K(+)(out) + H(+)(out). Its function is as follows. Transport of potassium into the cell. Likely operates as a K(+):H(+) symporter. This is Probable potassium transport system protein Kup from Leuconostoc mesenteroides subsp. mesenteroides (strain ATCC 8293 / DSM 20343 / BCRC 11652 / CCM 1803 / JCM 6124 / NCDO 523 / NBRC 100496 / NCIMB 8023 / NCTC 12954 / NRRL B-1118 / 37Y).